A 406-amino-acid polypeptide reads, in one-letter code: Bifunctional enzyme IspD/IspF (406 aa).

A 2-C-methyl-D-erythritol 4-phosphate cytidylyltransferase region spans residues M1–V246. Residues R247 to P406 are 2-C-methyl-D-erythritol 2,4-cyclodiphosphate synthase. D253 and H255 together coordinate a divalent metal cation. Residues D253–H255 and H279–S280 contribute to the 4-CDP-2-C-methyl-D-erythritol 2-phosphate site. H287 lines the a divalent metal cation pocket. 4-CDP-2-C-methyl-D-erythritol 2-phosphate is bound by residues D301–G303, T377–E380, F384, and R387.

This sequence in the N-terminal section; belongs to the IspD/TarI cytidylyltransferase family. IspD subfamily. In the C-terminal section; belongs to the IspF family. A divalent metal cation serves as cofactor.

It carries out the reaction 2-C-methyl-D-erythritol 4-phosphate + CTP + H(+) = 4-CDP-2-C-methyl-D-erythritol + diphosphate. The catalysed reaction is 4-CDP-2-C-methyl-D-erythritol 2-phosphate = 2-C-methyl-D-erythritol 2,4-cyclic diphosphate + CMP. It participates in isoprenoid biosynthesis; isopentenyl diphosphate biosynthesis via DXP pathway; isopentenyl diphosphate from 1-deoxy-D-xylulose 5-phosphate: step 2/6. The protein operates within isoprenoid biosynthesis; isopentenyl diphosphate biosynthesis via DXP pathway; isopentenyl diphosphate from 1-deoxy-D-xylulose 5-phosphate: step 4/6. Functionally, bifunctional enzyme that catalyzes the formation of 4-diphosphocytidyl-2-C-methyl-D-erythritol from CTP and 2-C-methyl-D-erythritol 4-phosphate (MEP) (IspD), and catalyzes the conversion of 4-diphosphocytidyl-2-C-methyl-D-erythritol 2-phosphate (CDP-ME2P) to 2-C-methyl-D-erythritol 2,4-cyclodiphosphate (ME-CPP) with a corresponding release of cytidine 5-monophosphate (CMP) (IspF). The sequence is that of Bifunctional enzyme IspD/IspF from Rhizobium rhizogenes (strain K84 / ATCC BAA-868) (Agrobacterium radiobacter).